The chain runs to 310 residues: Cytochrome f (310 aa).

The first 27 residues, 1 to 27, serve as a signal peptide directing secretion; that stretch reads MRRILTFFLGSIIIGLSIIISPSSSFA. 4 residues coordinate heme: Y28, C48, C51, and H52. A helical membrane pass occupies residues 277–297; that stretch reads VIGLIAFFAGVALTQILLVLK.

It belongs to the cytochrome f family. The 4 large subunits of the cytochrome b6-f complex are cytochrome b6, subunit IV (17 kDa polypeptide, PetD), cytochrome f and the Rieske protein, while the 4 small subunits are PetG, PetL, PetM and PetN. The complex functions as a dimer. Heme is required as a cofactor.

The protein resides in the cellular thylakoid membrane. Functionally, component of the cytochrome b6-f complex, which mediates electron transfer between photosystem II (PSII) and photosystem I (PSI), cyclic electron flow around PSI, and state transitions. The chain is Cytochrome f from Prochlorococcus marinus (strain SARG / CCMP1375 / SS120).